The primary structure comprises 28 residues: Phospholipase A2 (28 aa).

Gly28 provides a ligand contact to Ca(2+).

The cofactor is Ca(2+). In terms of tissue distribution, expressed by the venom gland.

It is found in the secreted. It carries out the reaction a 1,2-diacyl-sn-glycero-3-phosphocholine + H2O = a 1-acyl-sn-glycero-3-phosphocholine + a fatty acid + H(+). In terms of biological role, PLA2 catalyzes the calcium-dependent hydrolysis of the 2-acyl groups in 3-sn-phosphoglycerides. The polypeptide is Phospholipase A2 (Scolopendra dehaani (Thai centipede)).